A 129-amino-acid polypeptide reads, in one-letter code: uncharacterized protein (129 aa).

Its subcellular location is the cytoplasm. The protein resides in the cytosol. It is found in the nucleus. This is an uncharacterized protein from Schizosaccharomyces pombe (strain 972 / ATCC 24843) (Fission yeast).